Here is an 84-residue protein sequence, read N- to C-terminus: Small ribosomal subunit protein bS18 (84 aa).

This sequence belongs to the bacterial ribosomal protein bS18 family. In terms of assembly, part of the 30S ribosomal subunit. Forms a tight heterodimer with protein bS6.

Functionally, binds as a heterodimer with protein bS6 to the central domain of the 16S rRNA, where it helps stabilize the platform of the 30S subunit. The protein is Small ribosomal subunit protein bS18 of Clostridium kluyveri (strain NBRC 12016).